A 498-amino-acid chain; its full sequence is MELSGKSEFPTRTEIPNQASNGDAVPNTDAYMGLCNSLTYRFEGWRHLVENLIAFFKQLESTSKNNAKEYMKLSKVIVHPYKDANVFEEHGIQDIFAALRDQTAAIASDSEQISIQLPGTIINILELLREDLREHCKKIAAEGTKGVKVVEKQRAETQKYLSLLDRALLPWRASSPPTVNIKNDPFIVDRQVLNCLARQVQEENNHSVAVAQLQEFSFRFEQNLIAKIKDTVKQFEGMMNQTHVKAINHLQEVVRVSEAQTLAGEWTGYAKREPEFIHGSVPPRSVDAIKYPGKNDQPTVPIMAGYLIRKTSFLKKKQRGFYAFTHSGYLYEFKSSDSLQDPEPEFALYIPDCLIGRPSEKKPKFKITGKDATKKIFGARNDYAFRASNNTELMRWWEALNTHIANVNYIQPLSNANGPSAVSDSDDDDDDPNDFRPAVERQSSTMNTRMSQPSSAVNTNRSYGSEQIPSYADSQGNSGANNNFIYNASATGHNAWNV.

The tract at residues 1 to 23 (MELSGKSEFPTRTEIPNQASNGD) is disordered. A phosphoserine mark is found at S175 and S312. In terms of domain architecture, PH spans 300-405 (VPIMAGYLIR…WWEALNTHIA (106 aa)). Residues 416–475 (ANGPSAVSDSDDDDDDPNDFRPAVERQSSTMNTRMSQPSSAVNTNRSYGSEQIPSYADSQ) form a disordered region. The span at 441–475 (RQSSTMNTRMSQPSSAVNTNRSYGSEQIPSYADSQ) shows a compositional bias: polar residues.

It localises to the cell tip. Effector of the TORC2- and calcineurin-signaling pathways. Mediates actin polarization via inhibition of calcineurin-dependent transcription. May play a role in the response to the disruption of sphingolipid synthesis, where dephosphorylation of slm1 leads to the activation and phosphorylation of ypk1 through the TORC2 and PKH1 pathways, which in turn phosphorylates orm1 and lag1 to activate sphingolipid synthesis. The protein is Cytoskeletal signaling protein slm1 (slm1) of Schizosaccharomyces pombe (strain 972 / ATCC 24843) (Fission yeast).